We begin with the raw amino-acid sequence, 425 residues long: Serine--tRNA ligase (425 aa).

Residue 233 to 235 (TAE) coordinates L-serine. 264–266 (RRE) serves as a coordination point for ATP. L-serine is bound at residue Glu287. An ATP-binding site is contributed by 351–354 (EISS). Ser387 is an L-serine binding site.

The protein belongs to the class-II aminoacyl-tRNA synthetase family. Type-1 seryl-tRNA synthetase subfamily. As to quaternary structure, homodimer. The tRNA molecule binds across the dimer.

It localises to the cytoplasm. It carries out the reaction tRNA(Ser) + L-serine + ATP = L-seryl-tRNA(Ser) + AMP + diphosphate + H(+). The enzyme catalyses tRNA(Sec) + L-serine + ATP = L-seryl-tRNA(Sec) + AMP + diphosphate + H(+). The protein operates within aminoacyl-tRNA biosynthesis; selenocysteinyl-tRNA(Sec) biosynthesis; L-seryl-tRNA(Sec) from L-serine and tRNA(Sec): step 1/1. Catalyzes the attachment of serine to tRNA(Ser). Is also able to aminoacylate tRNA(Sec) with serine, to form the misacylated tRNA L-seryl-tRNA(Sec), which will be further converted into selenocysteinyl-tRNA(Sec). The sequence is that of Serine--tRNA ligase from Thermotoga neapolitana (strain ATCC 49049 / DSM 4359 / NBRC 107923 / NS-E).